A 1043-amino-acid chain; its full sequence is Integrator complex subunit 3 (1043 aa).

N-acetylmethionine is present on M1. S502, S537, and S995 each carry phosphoserine. Residues 977 to 1043 (YEDSSTKPPK…GSSAVGSDSD (67 aa)) are disordered. Acidic residues predominate over residues 1008 to 1022 (AEEESGSSSASEEED).

The protein belongs to the Integrator subunit 3 family. In terms of assembly, component of the Integrator complex, composed of core subunits INTS1, INTS2, INTS3, INTS4, INTS5, INTS6, INTS7, INTS8, INTS9/RC74, INTS10, INTS11/CPSF3L, INTS12, INTS13, INTS14 and INTS15. The core complex associates with protein phosphatase 2A subunits PPP2CA and PPP2R1A, to form the Integrator-PP2A (INTAC) complex. Component of the SOSS complex, composed of SOSS-B (SOSS-B1/NABP2 or SOSS-B2/NABP1), SOSS-A/INTS3 and SOSS-C/INIP. SOSS complexes containing SOSS-B1/NABP2 are more abundant than complexes containing SOSS-B2/NABP1. Interacts with SOSS-B1/NABP2, SOSS-B2/NABP1 and SOSS-C/INIP; the interaction is direct. Interacts with NBN/NBS1.

It is found in the nucleus. The protein resides in the cytoplasm. In terms of biological role, component of the integrator complex, a multiprotein complex that terminates RNA polymerase II (Pol II) transcription in the promoter-proximal region of genes. The integrator complex provides a quality checkpoint during transcription elongation by driving premature transcription termination of transcripts that are unfavorably configured for transcriptional elongation: the complex terminates transcription by (1) catalyzing dephosphorylation of the C-terminal domain (CTD) of Pol II subunit POLR2A/RPB1 and SUPT5H/SPT5, (2) degrading the exiting nascent RNA transcript via endonuclease activity and (3) promoting the release of Pol II from bound DNA. The integrator complex is also involved in terminating the synthesis of non-coding Pol II transcripts, such as enhancer RNAs (eRNAs), small nuclear RNAs (snRNAs), telomerase RNAs and long non-coding RNAs (lncRNAs). Within the integrator complex, INTS3 is involved in the post-termination step: INTS3 binds INTS7 in the open conformation of integrator complex and prevents the rebinding of Pol II to the integrator after termination cycle. Mediates recruitment of cytoplasmic dynein to the nuclear envelope, probably as component of the integrator complex. Component of the SOSS complex, a multiprotein complex that functions downstream of the MRN complex to promote DNA repair and G2/M checkpoint. The SOSS complex associates with single-stranded DNA at DNA lesions and influences diverse endpoints in the cellular DNA damage response including cell-cycle checkpoint activation, recombinational repair and maintenance of genomic stability. The SOSS complex is required for efficient homologous recombination-dependent repair of double-strand breaks (DSBs) and ATM-dependent signaling pathways. In the SOSS complex, it is required for the assembly of the complex and for stabilization of the complex at DNA damage sites. This is Integrator complex subunit 3 from Homo sapiens (Human).